A 191-amino-acid polypeptide reads, in one-letter code: NF-kappa-B inhibitor-interacting Ras-like protein 2 (191 aa).

The small GTPase-like stretch occupies residues 1–191; that stretch reads MGKSCKVVVC…KNKGSGSVDG (191 aa). 11–18 contacts GTP; that stretch reads GQAAVGKT. The Effector region signature appears at 35 to 43; that stretch reads MIETQEDIY. Residues 61–65 and 120–123 contribute to the GTP site; these read DTRGL and NKCD. Positions 170-191 are disordered; sequence QPQSKSAFPLSRKNKGSGSVDG.

It belongs to the small GTPase superfamily. Ras family. KappaB-Ras subfamily.

The protein resides in the cytoplasm. Atypical Ras-like protein that acts as a potent regulator of NF-kappa-B activity by preventing the degradation of NF-kappa-B inhibitor beta (NFKBIB) by most signals, explaining why NFKBIB is more resistant to degradation. The chain is NF-kappa-B inhibitor-interacting Ras-like protein 2 (NKIRAS2) from Gallus gallus (Chicken).